Consider the following 394-residue polypeptide: LL-diaminopimelate aminotransferase (394 aa).

Substrate is bound by residues Tyr14 and Gly41. Residues Tyr71, 104-105 (AK), Tyr128, Asn174, Tyr205, and 233-235 (SFS) contribute to the pyridoxal 5'-phosphate site. Residues Lys105, Tyr128, and Asn174 each coordinate substrate. N6-(pyridoxal phosphate)lysine is present on Lys236. Residues Arg244 and Asn275 each coordinate pyridoxal 5'-phosphate. The substrate site is built by Asn275 and Arg369.

The protein belongs to the class-I pyridoxal-phosphate-dependent aminotransferase family. LL-diaminopimelate aminotransferase subfamily. Homodimer. Pyridoxal 5'-phosphate is required as a cofactor.

It catalyses the reaction (2S,6S)-2,6-diaminopimelate + 2-oxoglutarate = (S)-2,3,4,5-tetrahydrodipicolinate + L-glutamate + H2O + H(+). It functions in the pathway amino-acid biosynthesis; L-lysine biosynthesis via DAP pathway; LL-2,6-diaminopimelate from (S)-tetrahydrodipicolinate (aminotransferase route): step 1/1. Its function is as follows. Involved in the synthesis of meso-diaminopimelate (m-DAP or DL-DAP), required for both lysine and peptidoglycan biosynthesis. Catalyzes the direct conversion of tetrahydrodipicolinate to LL-diaminopimelate. Is also able to use meso-diaminopimelate, cystathionine, lysine or ornithine as substrates. This is LL-diaminopimelate aminotransferase from Chlamydia trachomatis serovar D (strain ATCC VR-885 / DSM 19411 / UW-3/Cx).